Here is a 643-residue protein sequence, read N- to C-terminus: Protein tramtrack, beta isoform (643 aa).

One can recognise a BTB domain in the interval 33 to 98; that stretch reads TDVTLAVEGQ…MYRGEVSVDQ (66 aa). 2 disordered regions span residues 118–148 and 171–300; these read EVND…PQLQ and ANAG…GLDT. Lysine 123 participates in a covalent cross-link: Glycyl lysine isopeptide (Lys-Gly) (interchain with G-Cter in ubiquitin). Residues 125-145 show a composition bias toward low complexity; it reads SPAAAAAGAGATGSESTATTP. A compositionally biased stretch (polar residues) spans 176-187; that stretch reads TPTLPVQPSLLS. Over residues 192-201 the composition is skewed to basic residues; the sequence is PKRKRGRPRK. A Glycyl lysine isopeptide (Lys-Gly) (interchain with G-Cter in ubiquitin) cross-link involves residue lysine 201. The segment covering 254-285 has biased composition (basic and acidic residues); the sequence is HTDDLNESRDSLPSKRSKNSKDHRVVSHHEDN. Residues lysine 355, lysine 397, lysine 418, lysine 457, lysine 478, and lysine 480 each participate in a glycyl lysine isopeptide (Lys-Gly) (interchain with G-Cter in ubiquitin) cross-link. 2 consecutive C2H2-type zinc fingers follow at residues 508 to 531 and 538 to 561; these read YRCK…VTSH and YPCP…KIIH. A Glycyl lysine isopeptide (Lys-Gly) (interchain with G-Cter in ubiquitin) cross-link involves residue lysine 545. The segment at 584 to 643 is disordered; sequence GVSGASTPPPPDLSGQNSNQSLPATSNALSTSSSSSTSSSSGSLGPLTTSAPPAPAAAAQ. The segment covering 604-643 has biased composition (low complexity); the sequence is SLPATSNALSTSSSSSTSSSSGSLGPLTTSAPPAPAAAAQ.

As to quaternary structure, can form homodimers. Interacts with Trl in vivo via the BTB domain. Interacts with phyl. Interacts with Usp47. Polyubiquitinated by sina. Polyubiquitin linkage is mainly through 'Lys-48', but linkage through 'Lys-63' also occurs. Deubiquitination by Usp47 leads to its stabilization.

Its subcellular location is the nucleus. Functionally, binds to a number of sites in the transcriptional regulatory region of ftz. Isoform beta is required to repress inappropriate segmentation gene transcription and repress genes incompatible with development of photoreceptor cell fates. Probable repressor of the transcription of the segmentation genes ftz, eve, h, odd, run, and en. Inhibits Trl-dependent activation of eve. May bind to the region AGGGC/TGG. Degradation of ttk is directed by binding of sinah or sina, via the adapter molecule phyl which binds to the BTB domain of ttk. A second method of degradation exists that is phyl-independent, this is mediated by recognition of motifs in the C-terminus of ttk. The protein is Protein tramtrack, beta isoform (ttk) of Drosophila melanogaster (Fruit fly).